We begin with the raw amino-acid sequence, 292 residues long: Sulfofructosephosphate aldolase (292 aa).

The Schiff-base intermediate with substrate role is filled by Lys193.

Belongs to the aldolase LacD family. Homotetramer.

It carries out the reaction 6-deoxy-6-sulfo-D-fructose 1-phosphate = (2S)-3-sulfolactaldehyde + dihydroxyacetone phosphate. Its function is as follows. Cleaves 6-deoxy-6-sulfo-D-fructose 1-phosphate (SFP) to form dihydroxyacetone phosphate (DHAP) and 3-sulfolactaldehyde (SLA). The sequence is that of Sulfofructosephosphate aldolase (yihT) from Salmonella typhi.